The following is a 101-amino-acid chain: Small ribosomal subunit protein uS14 (101 aa).

It belongs to the universal ribosomal protein uS14 family. In terms of assembly, part of the 30S ribosomal subunit. Contacts proteins S3 and S10.

Its function is as follows. Binds 16S rRNA, required for the assembly of 30S particles and may also be responsible for determining the conformation of the 16S rRNA at the A site. The protein is Small ribosomal subunit protein uS14 of Pseudomonas aeruginosa (strain LESB58).